The sequence spans 136 residues: NADH-ubiquinone oxidoreductase chain 3 (136 aa).

The next 3 membrane-spanning stretches (helical) occupy residues 5–25, 55–75, and 85–105; these read TFFLFLIPVLAIILLAVNLIF, ISFFIFALLFLLFDLEILLVY, and GIYGLVIMLVFFLVGTLGFAF.

Belongs to the complex I subunit 3 family.

It is found in the mitochondrion membrane. The enzyme catalyses a ubiquinone + NADH + 5 H(+)(in) = a ubiquinol + NAD(+) + 4 H(+)(out). Functionally, core subunit of the mitochondrial membrane respiratory chain NADH dehydrogenase (Complex I) that is believed to belong to the minimal assembly required for catalysis. Complex I functions in the transfer of electrons from NADH to the respiratory chain. The immediate electron acceptor for the enzyme is believed to be ubiquinone. This chain is NADH-ubiquinone oxidoreductase chain 3 (nd3), found in Emericella nidulans (Aspergillus nidulans).